The sequence spans 621 residues: F-box only protein 21 (621 aa).

An F-box domain is found at 28-77 (SCLVNLPGEVLEYILCCGSLTAADIGRVSSTCRRLRELCQSSGKVWKEQF).

As to quaternary structure, interacts with SKP1 and CUL1.

Substrate-recognition component of the SCF (SKP1-CUL1-F-box protein)-type E3 ubiquitin ligase complex. In Pongo abelii (Sumatran orangutan), this protein is F-box only protein 21 (FBXO21).